A 136-amino-acid chain; its full sequence is Glutamate-rich protein 4 (136 aa).

Residues 92–136 (EEEEEEEQEEKSCVEENKGPEEKQDEERSRSSYPAQRLPDFGMTI) are disordered. The segment covering 101 to 121 (EKSCVEENKGPEEKQDEERSR) has biased composition (basic and acidic residues).

This chain is Glutamate-rich protein 4 (Erich4), found in Mus musculus (Mouse).